A 1178-amino-acid polypeptide reads, in one-letter code: DNA-directed RNA polymerase subunit beta' (1178 aa).

Positions 60, 62, 75, and 78 each coordinate Zn(2+). Mg(2+) contacts are provided by D450, D452, and D454. Residues C795, C869, C876, and C879 each coordinate Zn(2+).

It belongs to the RNA polymerase beta' chain family. In terms of assembly, the RNAP catalytic core consists of 2 alpha, 1 beta, 1 beta' and 1 omega subunit. When a sigma factor is associated with the core the holoenzyme is formed, which can initiate transcription. The cofactor is Mg(2+). Zn(2+) is required as a cofactor.

It catalyses the reaction RNA(n) + a ribonucleoside 5'-triphosphate = RNA(n+1) + diphosphate. Its function is as follows. DNA-dependent RNA polymerase catalyzes the transcription of DNA into RNA using the four ribonucleoside triphosphates as substrates. This chain is DNA-directed RNA polymerase subunit beta', found in Clostridium botulinum (strain Loch Maree / Type A3).